Here is a 227-residue protein sequence, read N- to C-terminus: NADH-quinone oxidoreductase subunit C (227 aa).

This sequence belongs to the complex I 30 kDa subunit family. In terms of assembly, NDH-1 is composed of 14 different subunits. Subunits NuoB, C, D, E, F, and G constitute the peripheral sector of the complex.

It is found in the cell inner membrane. The enzyme catalyses a quinone + NADH + 5 H(+)(in) = a quinol + NAD(+) + 4 H(+)(out). In terms of biological role, NDH-1 shuttles electrons from NADH, via FMN and iron-sulfur (Fe-S) centers, to quinones in the respiratory chain. The immediate electron acceptor for the enzyme in this species is believed to be ubiquinone. Couples the redox reaction to proton translocation (for every two electrons transferred, four hydrogen ions are translocated across the cytoplasmic membrane), and thus conserves the redox energy in a proton gradient. This chain is NADH-quinone oxidoreductase subunit C, found in Legionella pneumophila subsp. pneumophila (strain Philadelphia 1 / ATCC 33152 / DSM 7513).